Reading from the N-terminus, the 430-residue chain is Meiotically up-regulated gene 132 protein (430 aa).

It belongs to the UPF0300 family.

The protein localises to the mitochondrion. Has a role in meiosis. This Schizosaccharomyces pombe (strain 972 / ATCC 24843) (Fission yeast) protein is Meiotically up-regulated gene 132 protein (mug132).